Here is a 187-residue protein sequence, read N- to C-terminus: Peptide deformylase (187 aa).

Residues Cys-94 and His-136 each contribute to the Fe cation site. Glu-137 is an active-site residue. His-140 is a Fe cation binding site.

This sequence belongs to the polypeptide deformylase family. Fe(2+) is required as a cofactor.

It catalyses the reaction N-terminal N-formyl-L-methionyl-[peptide] + H2O = N-terminal L-methionyl-[peptide] + formate. Functionally, removes the formyl group from the N-terminal Met of newly synthesized proteins. Requires at least a dipeptide for an efficient rate of reaction. N-terminal L-methionine is a prerequisite for activity but the enzyme has broad specificity at other positions. The protein is Peptide deformylase of Chlorobaculum parvum (strain DSM 263 / NCIMB 8327) (Chlorobium vibrioforme subsp. thiosulfatophilum).